The primary structure comprises 361 residues: MLYWLIDLSSSFPAFNVFRYITFRTGGAMVTGALFVFMFGPWIIDNLRLRQGKGQPIRTDGPQSHLMTKKGTPTMGGLMILSGLTVGTLLWANPLNPYVWIVLAVTLGFGFVGFYDDYMKVTKQTHAGISGRTRLLIEFTIAGAACFALVWLGRAPLSSSLVIPFFKEVMLNLGWAFVVFGAFVVVGAGNAVNLTDGLDGLAIVPVMIAAASFGLISYLAGNAVFAEYLQINYVAGTGELAVLCGALLGAGLGFLWFNAPPASIFMGDTGSLALGGMLGSIAVAVKHEIVLAVIGGLFVLEAVSVIVQVASFKLTGKRVFKMAPIHHHFEQKGWTEPQIVIRFWIIAVMLALAGLSTLKLR.

A run of 10 helical transmembrane segments spans residues 25-45 (TGGA…WIID), 72-92 (TPTM…LLWA), 95-115 (LNPY…VGFY), 135-155 (LLIE…LGRA), 169-189 (VMLN…VGAG), 200-220 (GLAI…SYLA), 240-260 (LAVL…FNAP), 264-284 (IFMG…IAVA), 289-309 (IVLA…IVQV), and 338-358 (QIVI…LSTL).

This sequence belongs to the glycosyltransferase 4 family. MraY subfamily. Requires Mg(2+) as cofactor.

The protein resides in the cell inner membrane. It catalyses the reaction UDP-N-acetyl-alpha-D-muramoyl-L-alanyl-gamma-D-glutamyl-meso-2,6-diaminopimeloyl-D-alanyl-D-alanine + di-trans,octa-cis-undecaprenyl phosphate = di-trans,octa-cis-undecaprenyl diphospho-N-acetyl-alpha-D-muramoyl-L-alanyl-D-glutamyl-meso-2,6-diaminopimeloyl-D-alanyl-D-alanine + UMP. The protein operates within cell wall biogenesis; peptidoglycan biosynthesis. Catalyzes the initial step of the lipid cycle reactions in the biosynthesis of the cell wall peptidoglycan: transfers peptidoglycan precursor phospho-MurNAc-pentapeptide from UDP-MurNAc-pentapeptide onto the lipid carrier undecaprenyl phosphate, yielding undecaprenyl-pyrophosphoryl-MurNAc-pentapeptide, known as lipid I. The protein is Phospho-N-acetylmuramoyl-pentapeptide-transferase of Rhodopseudomonas palustris (strain ATCC BAA-98 / CGA009).